Consider the following 158-residue polypeptide: UPAR/Ly6 domain-containing protein crim (158 aa).

The signal sequence occupies residues 1–22 (MHYHTNLIAALLLAALIHEGSA). Residues 23–136 (IWCYRCTSAT…FCFLDHRCNG (114 aa)) are Extracellular-facing. The N-linked (GlcNAc...) asparagine glycan is linked to asparagine 107. Asparagine 135 carries the GPI-anchor amidated asparagine lipid modification. The propeptide at 136-158 (GASGLQTSAVIGLLTLIPALLLR) is removed in mature form. Residues 137-157 (ASGLQTSAVIGLLTLIPALLL) form a helical membrane-spanning segment. A topological domain (cytoplasmic) is located at residue arginine 158.

It belongs to the quiver family.

It is found in the membrane. Functionally, required for septate junction assembly possibly by organizing the preassembly and transport of septate junction proteins. Involved in epithelial cell septate junction-mediated paracellular barrier functions of trachea, hindgut and salivary gland. This chain is UPAR/Ly6 domain-containing protein crim, found in Drosophila melanogaster (Fruit fly).